The chain runs to 506 residues: ATP synthase subunit alpha (506 aa).

Residue 170–177 (GDRQTGKT) participates in ATP binding.

Belongs to the ATPase alpha/beta chains family. F-type ATPases have 2 components, CF(1) - the catalytic core - and CF(0) - the membrane proton channel. CF(1) has five subunits: alpha(3), beta(3), gamma(1), delta(1), epsilon(1). CF(0) has four main subunits: a(1), b(1), b'(1) and c(9-12).

It localises to the cellular thylakoid membrane. It carries out the reaction ATP + H2O + 4 H(+)(in) = ADP + phosphate + 5 H(+)(out). In terms of biological role, produces ATP from ADP in the presence of a proton gradient across the membrane. The alpha chain is a regulatory subunit. The chain is ATP synthase subunit alpha from Synechococcus sp. (strain CC9605).